The sequence spans 354 residues: Lysophosphatidic acid receptor 3 (354 aa).

At 1–31 (MNECHYDKRMDFFYNRSNTDTADEWTGTKLV) the chain is on the extracellular side. N-linked (GlcNAc...) asparagine glycosylation occurs at Asn-15. The helical transmembrane segment at 32–52 (IVLCVGTFFCLFIFFSNSLVI) threads the bilayer. Residues 53-67 (AAVITNRKFHFPFYY) lie on the Cytoplasmic side of the membrane. Residues 68-88 (LLANLAAADFFAGIAYVFLMF) traverse the membrane as a helical segment. Residues 89–101 (NTGPVSKTLTVNR) are Extracellular-facing. The helical transmembrane segment at 102 to 124 (WFLRQGLLDTSLTASLANLLVIA) threads the bilayer. The Cytoplasmic portion of the chain corresponds to 125–146 (VERHMSIMRMRVHSNLTKKRVT). The chain crosses the membrane as a helical span at residues 147–167 (LLILLVWAIAIFMGAVPTLGW). The Extracellular segment spans residues 168-186 (NCLCNISACSSLAPIYSRS). Asn-172 is a glycosylation site (N-linked (GlcNAc...) asparagine). Residues 187–207 (YLIFWTVSNLLAFFIMVAVYV) form a helical membrane-spanning segment. Residues 208-240 (RIYMYVKRKTNVLSPHTSGSISRRRAPMKLMKT) are Cytoplasmic-facing. A helical transmembrane segment spans residues 241 to 261 (VMTVLGAFVVCWTPGLVVLLL). Topologically, residues 262-276 (DGLNCKQCNVQHVKR) are extracellular. The chain crosses the membrane as a helical span at residues 277–295 (WFLLLALLNSVMNPIIYSY). Residues 296-354 (KDEDMYNTMRKMICCALQDSNTERRPSRNPSTIHSRSETGSQYLEDSISQGPVCNKNGS) are Cytoplasmic-facing. Cys-309 carries the S-palmitoyl cysteine lipid modification. Residues 315-354 (SNTERRPSRNPSTIHSRSETGSQYLEDSISQGPVCNKNGS) form a disordered region. Residues 323–354 (RNPSTIHSRSETGSQYLEDSISQGPVCNKNGS) show a composition bias toward polar residues.

This sequence belongs to the G-protein coupled receptor 1 family. In terms of tissue distribution, most abundantly expressed in testes, kidney, and lung, with moderate levels in small intestine, and low levels in heart, stomach, spleen, and adult and perinatal brain. Little or no expression in embryonic brain, liver, or thymus.

Its subcellular location is the cell membrane. Functionally, receptor for lysophosphatidic acid (LPA), a mediator of diverse cellular activities. Seems to be coupled to the G(i)/G(o) and G(q) families of heteromeric G proteins. This is Lysophosphatidic acid receptor 3 (Lpar3) from Mus musculus (Mouse).